We begin with the raw amino-acid sequence, 626 residues long: Chaperone protein HtpG (626 aa).

Residues 1 to 339 (MSQNQETRGF…SNDLPLNVSR (339 aa)) are a; substrate-binding. Positions 340-555 (EILQDNKITA…NDQMTTQMAK (216 aa)) are b. Residues 556-626 (LFAAAGQPVP…FIKRINKLLG (71 aa)) are c.

It belongs to the heat shock protein 90 family. As to quaternary structure, homodimer.

It localises to the cytoplasm. Molecular chaperone. Has ATPase activity. The chain is Chaperone protein HtpG from Haemophilus influenzae (strain PittGG).